Reading from the N-terminus, the 296-residue chain is D-alanine--D-alanine ligase (296 aa).

One can recognise an ATP-grasp domain in the interval 103–293 (KEILMHHRMP…FDSFVKRIIE (191 aa)). ATP is bound at residue 129 to 180 (ISFPVAVKPSSGGSSIATFKVKSIQELKHAYEEASKYGEVMIEQWVTGKEIT). 3 residues coordinate Mg(2+): D247, E260, and N262.

It belongs to the D-alanine--D-alanine ligase family. Mg(2+) serves as cofactor. Requires Mn(2+) as cofactor.

It localises to the cytoplasm. It catalyses the reaction 2 D-alanine + ATP = D-alanyl-D-alanine + ADP + phosphate + H(+). It participates in cell wall biogenesis; peptidoglycan biosynthesis. Functionally, cell wall formation. The polypeptide is D-alanine--D-alanine ligase (Francisella tularensis subsp. tularensis (strain FSC 198)).